A 76-amino-acid polypeptide reads, in one-letter code: Omega-conotoxin-like Ai6.3 (76 aa).

Positions methionine 1–alanine 22 are cleaved as a signal peptide. Residues valine 23–asparagine 50 constitute a propeptide that is removed on maturation. 3 disulfide bridges follow: cysteine 53/cysteine 67, cysteine 60/cysteine 71, and cysteine 66/cysteine 75.

The protein belongs to the conotoxin O1 superfamily. Expressed by the venom duct.

The protein localises to the secreted. In terms of biological role, omega-conotoxins act at presynaptic membranes, they bind and block voltage-gated calcium channels (Cav). This Conus ammiralis (Admiral cone) protein is Omega-conotoxin-like Ai6.3.